Reading from the N-terminus, the 261-residue chain is Ribosomal RNA small subunit methyltransferase J (261 aa).

Residues 109–110, 125–126, and aspartate 179 each bind S-adenosyl-L-methionine; these read RD and ER.

This sequence belongs to the methyltransferase superfamily. RsmJ family.

It is found in the cytoplasm. The enzyme catalyses guanosine(1516) in 16S rRNA + S-adenosyl-L-methionine = N(2)-methylguanosine(1516) in 16S rRNA + S-adenosyl-L-homocysteine + H(+). Specifically methylates the guanosine in position 1516 of 16S rRNA. This is Ribosomal RNA small subunit methyltransferase J from Pseudomonas aeruginosa (strain UCBPP-PA14).